A 380-amino-acid polypeptide reads, in one-letter code: DNA replication and repair protein RecF (380 aa).

Residue Gly30–Thr37 participates in ATP binding.

This sequence belongs to the RecF family.

It localises to the cytoplasm. The RecF protein is involved in DNA metabolism; it is required for DNA replication and normal SOS inducibility. RecF binds preferentially to single-stranded, linear DNA. It also seems to bind ATP. The protein is DNA replication and repair protein RecF of Myxococcus xanthus (strain DK1622).